The chain runs to 193 residues: Large ribosomal subunit protein uL5 (193 aa).

It belongs to the universal ribosomal protein uL5 family. Part of the 50S ribosomal subunit; part of the 5S rRNA/L5/L18/L25 subcomplex. Contacts the 5S rRNA and the P site tRNA. Forms a bridge to the 30S subunit in the 70S ribosome.

In terms of biological role, this is one of the proteins that bind and probably mediate the attachment of the 5S RNA into the large ribosomal subunit, where it forms part of the central protuberance. In the 70S ribosome it contacts protein S13 of the 30S subunit (bridge B1b), connecting the 2 subunits; this bridge is implicated in subunit movement. Contacts the P site tRNA; the 5S rRNA and some of its associated proteins might help stabilize positioning of ribosome-bound tRNAs. In Novosphingobium aromaticivorans (strain ATCC 700278 / DSM 12444 / CCUG 56034 / CIP 105152 / NBRC 16084 / F199), this protein is Large ribosomal subunit protein uL5.